The following is a 402-amino-acid chain: Nicotinate phosphoribosyltransferase (402 aa).

Phosphohistidine; by autocatalysis is present on H224.

It belongs to the NAPRTase family. Transiently phosphorylated on a His residue during the reaction cycle. Phosphorylation strongly increases the affinity for substrates and increases the rate of nicotinate D-ribonucleotide production. Dephosphorylation regenerates the low-affinity form of the enzyme, leading to product release.

The enzyme catalyses nicotinate + 5-phospho-alpha-D-ribose 1-diphosphate + ATP + H2O = nicotinate beta-D-ribonucleotide + ADP + phosphate + diphosphate. It functions in the pathway cofactor biosynthesis; NAD(+) biosynthesis; nicotinate D-ribonucleotide from nicotinate: step 1/1. In terms of biological role, catalyzes the synthesis of beta-nicotinate D-ribonucleotide from nicotinate and 5-phospho-D-ribose 1-phosphate at the expense of ATP. The protein is Nicotinate phosphoribosyltransferase of Neisseria gonorrhoeae (strain ATCC 700825 / FA 1090).